The sequence spans 451 residues: Phosphoglucosamine mutase (451 aa).

S101 functions as the Phosphoserine intermediate in the catalytic mechanism. Mg(2+)-binding residues include S101, D243, D245, and D247. S101 carries the phosphoserine modification.

The protein belongs to the phosphohexose mutase family. Requires Mg(2+) as cofactor. Post-translationally, activated by phosphorylation.

The enzyme catalyses alpha-D-glucosamine 1-phosphate = D-glucosamine 6-phosphate. Its function is as follows. Catalyzes the conversion of glucosamine-6-phosphate to glucosamine-1-phosphate. This is Phosphoglucosamine mutase from Thermodesulfovibrio yellowstonii (strain ATCC 51303 / DSM 11347 / YP87).